The sequence spans 668 residues: S-adenosyl-L-methionine-dependent tRNA 4-demethylwyosine synthase TYW1B (668 aa).

The Flavodoxin-like domain occupies Cys-37–Ile-191. FMN-binding positions include Glu-43–Phe-47 and Val-130–Met-162. Residues Arg-202–Glu-269 are disordered. Basic and acidic residues-rich tracts occupy residues Gly-213 to Glu-223 and Asp-233 to Glu-243. Residues Glu-244–Gly-255 show a composition bias toward acidic residues. One can recognise a Radical SAM core domain in the interval Leu-336–Ala-580. Cys-352, Cys-356, and Cys-359 together coordinate [4Fe-4S] cluster.

The protein belongs to the TYW1 family. It depends on [4Fe-4S] cluster as a cofactor.

The catalysed reaction is N(1)-methylguanosine(37) in tRNA(Phe) + pyruvate + S-adenosyl-L-methionine = 4-demethylwyosine(37) in tRNA(Phe) + 5'-deoxyadenosine + L-methionine + CO2 + H2O. The protein operates within tRNA modification; wybutosine-tRNA(Phe) biosynthesis. Its function is as follows. Probable component of the wybutosine biosynthesis pathway. Wybutosine is a hyper modified guanosine with a tricyclic base found at the 3'-position adjacent to the anticodon of eukaryotic phenylalanine tRNA. Catalyzes the condensation of N-methylguanine with 2 carbon atoms from pyruvate to form the tricyclic 4-demethylwyosine, an intermediate in wybutosine biosynthesis. This is S-adenosyl-L-methionine-dependent tRNA 4-demethylwyosine synthase TYW1B (TYW1B) from Homo sapiens (Human).